The sequence spans 158 residues: MPEKIIELFTDGGCRGNPGIGAWGVWLRLAGQERVLWGFVPETTNNRMELTAALRGLEALKRPSAVRVISDSRYLRDGMTQWLAGWQRRGWRTAGGDAVKNRDIWELLAAVAARHQVQWEWVRGHSGHIENERVDALLNRVMDQYAAGGQAREGEGWL.

Residues 2 to 143 enclose the RNase H type-1 domain; that stretch reads PEKIIELFTD…VDALLNRVMD (142 aa). Aspartate 11, glutamate 49, aspartate 71, and aspartate 135 together coordinate Mg(2+).

Belongs to the RNase H family. In terms of assembly, monomer. Mg(2+) is required as a cofactor.

The protein localises to the cytoplasm. The enzyme catalyses Endonucleolytic cleavage to 5'-phosphomonoester.. Endonuclease that specifically degrades the RNA of RNA-DNA hybrids. This chain is Ribonuclease H, found in Acidithiobacillus ferrooxidans (strain ATCC 23270 / DSM 14882 / CIP 104768 / NCIMB 8455) (Ferrobacillus ferrooxidans (strain ATCC 23270)).